The chain runs to 205 residues: SCO2-like protein RC0895 (205 aa).

Cu cation is bound by residues C82, C86, and H172.

Belongs to the SCO1/2 family.

The polypeptide is SCO2-like protein RC0895 (Rickettsia conorii (strain ATCC VR-613 / Malish 7)).